Here is a 1553-residue protein sequence, read N- to C-terminus: Sterol 3-beta-glucosyltransferase (1553 aa).

Polar residues-rich tracts occupy residues 1–10 (MASSQPTSSG) and 25–36 (LNTETSSSQHRA). 2 disordered regions span residues 1-106 (MASS…NEED) and 189-270 (PASA…GLAP). Positions 90 to 100 (LPDRLKDNGKE) are enriched in basic and acidic residues. A compositionally biased stretch (low complexity) spans 211-222 (LLQSVPSLSRLS). A compositionally biased stretch (basic residues) spans 223-232 (SSHKSKKTKQ). 2 consecutive GRAM domains span residues 323–370 (KKLK…HLPK) and 464–495 (SLQR…EEAQ). The 97-residue stretch at 374-470 (EIAKSGYLSK…WVKSLQRVIF (97 aa)) folds into the PH domain. Disordered stretches follow at residues 542 to 569 (SPED…GSPR), 611 to 662 (FSRR…FDDP), and 805 to 825 (GKKH…VEDD). Over residues 633–650 (LHGDGRRSFSKPRHEPHA) the composition is skewed to basic and acidic residues. A compositionally biased stretch (polar residues) spans 651–662 (STDSYAQSFDDP). Over residues 810 to 819 (DHPAGRRTER) the composition is skewed to basic and acidic residues. One can recognise a GRAM 3 domain in the interval 834–900 (ARFQAHFALP…KDIETVDKEK (67 aa)). 11 residues coordinate UDP-alpha-D-glucose: Ser-1020, Arg-1021, Asp-1023, Ala-1328, His-1330, His-1343, Ser-1346, Gly-1347, Thr-1348, Asp-1367, and Gln-1368. Disordered stretches follow at residues 1446-1504 (KHQS…GSMS) and 1527-1553 (PALG…VKYV). The segment covering 1466–1488 (PEDDQGQAAEEDDIDADDEEEES) has biased composition (acidic residues).

Belongs to the glycosyltransferase 28 family.

It is found in the cytoplasm. The protein resides in the preautophagosomal structure membrane. The enzyme catalyses a sterol + UDP-alpha-D-glucose = a sterol 3-beta-D-glucoside + UDP + H(+). The catalysed reaction is ergosterol + UDP-alpha-D-glucose = ergosteryl 3-beta-D-glucoside + UDP + H(+). Functionally, sterol glycosyltransferase responsible for the glycosylation of ergosterol to form ergosterol-glucoside. The sequence is that of Sterol 3-beta-glucosyltransferase (apg-12) from Neurospora crassa (strain ATCC 24698 / 74-OR23-1A / CBS 708.71 / DSM 1257 / FGSC 987).